We begin with the raw amino-acid sequence, 279 residues long: Putative hydroxypyruvate isomerase (279 aa).

Active-site proton donor/acceptor residues include glutamate 155 and glutamate 256. A disordered region spans residues 260–279 (GDDPSAQSFSWLPAGARAAR).

It belongs to the hyi family.

The enzyme catalyses 3-hydroxypyruvate = 2-hydroxy-3-oxopropanoate. In terms of biological role, catalyzes the reversible isomerization between hydroxypyruvate and 2-hydroxy-3-oxopropanoate (also termed tartronate semialdehyde). This is Putative hydroxypyruvate isomerase from Streptomyces coelicolor (strain ATCC BAA-471 / A3(2) / M145).